The chain runs to 477 residues: PTS system MurNAc-GlcNAc-specific EIIBC component (477 aa).

The 83-residue stretch at 5–87 folds into the PTS EIIB type-1 domain; sequence QQLAHHILDA…VKLSGVQLGE (83 aa). Cys27 acts as the Phosphocysteine intermediate; for EIIB activity in catalysis. The tract at residues 91–113 is disordered; that stretch reads HRSNTSNIKNQAQQNKREFQQKR. Positions 92–104 are enriched in polar residues; sequence RSNTSNIKNQAQQ. In terms of domain architecture, PTS EIIC type-1 spans 123 to 477; the sequence is KSIANIFIPL…EMRNLNKLGD (355 aa). The next 10 membrane-spanning stretches (helical) occupy residues 128–148, 167–187, 192–212, 227–247, 267–287, 298–318, 342–362, 377–397, 401–421, and 443–463; these read IFIPLIPAFIGAGLIGGIAAV, VAVLNVIKDGMLAYLAIFTGF, VFGATPGLGGVIGGTTLLTGI, LIAGQGGIIGVILAVWLLSII, ISLLIIGLLTIFFFMPIAGFI, VIGVGGIFSGFIIGAFFLPLV, LLPIAAMAGAGQVGAALALWV, ALPVGFLGIGEPLIYGVTLPL, FITACLGGGIGGAVIGGIGHI, and LGYIIGLLSAYLAGFIFTYFF.

The protein resides in the cell membrane. The catalysed reaction is N-acetyl-beta-D-muramate-(1-&gt;4)-N-acetyl-D-glucosamine(out) + N(pros)-phospho-L-histidyl-[protein] = 6-phospho-N-acetyl-beta-D-muramate-(1-&gt;4)-N-acetyl-D-glucosamine(in) + L-histidyl-[protein]. The protein operates within cell wall biogenesis; peptidoglycan recycling. Functionally, the phosphoenolpyruvate-dependent sugar phosphotransferase system (sugar PTS), a major carbohydrate active transport system, catalyzes the phosphorylation of incoming sugar substrates concomitantly with their translocation across the cell membrane. This system is involved in the uptake and phosphorylation of MurNAc-GlcNAc, the principle peptidoglycan turnover product of S.aureus, yielding cytoplasmic MurNAc 6P-GlcNAc. The sequence is that of PTS system MurNAc-GlcNAc-specific EIIBC component from Staphylococcus haemolyticus (strain JCSC1435).